Here is a 200-residue protein sequence, read N- to C-terminus: MGRLHCTQDPVPEAVGGDMQQLNQLSAQQFSALTEVLFHFLTEPKEVERFLAQLSEFAATNQISLGPLRSIVKSLLLVPNGALKKGLTAEQVRADFMTLGLSEEKAIYFSEKWKQNAPTLARWAVGQTLMINQLVDMEWKFGVTSGSSELEKVGSIFLQLKLVVKKGNQTENVYIELTLPQFYSFLHEMERVRTSMECFS.

The 68-residue stretch at 133–200 (QLVDMEWKFG…RVRTSMECFS (68 aa)) folds into the COMM domain.

The protein belongs to the COMM domain-containing protein 7 family. In terms of assembly, component of the commander complex consisting of the CCC subcomplex and the retriever subcomplex. Component of the CCC (COMMD/CCDC22/CCDC93) subcomplex consisting of COMMD1, COMMD2, COMMD3, COMMD4, COMMD5, COMMD6, COMMD7, COMMD8, COMMD9, COMMD10, CCDC22 and CCDC93; within the complex forms a heterodimer with COMMD9. Interacts with RELA. Interacts with CCDC22, CCDC93, SCNN1B, CUL7.

It is found in the cytoplasmic vesicle. Its function is as follows. Scaffold protein in the commander complex that is essential for endosomal recycling of transmembrane cargos; the commander complex is composed of the CCC subcomplex and the retriever subcomplex. May modulate activity of cullin-RING E3 ubiquitin ligase (CRL) complexes. Associates with the NF-kappa-B complex and suppresses its transcriptional activity. This is COMM domain-containing protein 7 (COMMD7) from Bos taurus (Bovine).